The chain runs to 209 residues: ATP synthase subunit b', chloroplastic (209 aa).

Residues 1 to 62 (MASLLARPQQ…NALMAMPAAA (62 aa)) constitute a chloroplast transit peptide. A helical membrane pass occupies residues 67 to 87 (IFDFNLTLPVMAGEFLLLMVF).

The protein belongs to the ATPase B chain family. In terms of assembly, F-type ATPases have 2 components, F(1) - the catalytic core - and F(0) - the membrane proton channel. F(1) has five subunits: alpha(3), beta(3), gamma(1), delta(1), epsilon(1). F(0) has four main subunits: a(1), b(1), b'(1) and c(10-14). The alpha and beta chains form an alternating ring which encloses part of the gamma chain. F(1) is attached to F(0) by a central stalk formed by the gamma and epsilon chains, while a peripheral stalk is formed by the delta, b and b' chains.

The protein localises to the plastid. Its subcellular location is the chloroplast thylakoid membrane. Functionally, f(1)F(0) ATP synthase produces ATP from ADP in the presence of a proton or sodium gradient. F-type ATPases consist of two structural domains, F(1) containing the extramembraneous catalytic core and F(0) containing the membrane proton channel, linked together by a central stalk and a peripheral stalk. During catalysis, ATP synthesis in the catalytic domain of F(1) is coupled via a rotary mechanism of the central stalk subunits to proton translocation. Component of the F(0) channel, it forms part of the peripheral stalk, linking F(1) to F(0). The b'-subunit is a diverged and duplicated form of b found in plants and photosynthetic bacteria. The protein is ATP synthase subunit b', chloroplastic of Chlamydomonas reinhardtii (Chlamydomonas smithii).